Reading from the N-terminus, the 316-residue chain is Ribonuclease Z (316 aa).

Residues His-63, His-65, Asp-67, His-68, His-143, Asp-213, and His-271 each contribute to the Zn(2+) site. Asp-67 acts as the Proton acceptor in catalysis.

Belongs to the RNase Z family. Homodimer. Zn(2+) serves as cofactor.

It catalyses the reaction Endonucleolytic cleavage of RNA, removing extra 3' nucleotides from tRNA precursor, generating 3' termini of tRNAs. A 3'-hydroxy group is left at the tRNA terminus and a 5'-phosphoryl group is left at the trailer molecule.. In terms of biological role, zinc phosphodiesterase, which displays some tRNA 3'-processing endonuclease activity. Probably involved in tRNA maturation, by removing a 3'-trailer from precursor tRNA. The sequence is that of Ribonuclease Z from Bacteroides thetaiotaomicron (strain ATCC 29148 / DSM 2079 / JCM 5827 / CCUG 10774 / NCTC 10582 / VPI-5482 / E50).